The sequence spans 72 residues: MSYQQQQCKQPCQPPPVCPTPKCPEPCPPPKCPEPCPPPKCPQPCPPQQCQQKYPPVTPSPPCQSKYPPKSK.

Over residues 1 to 11 the composition is skewed to low complexity; the sequence is MSYQQQQCKQP. Residues 1–20 are disordered; that stretch reads MSYQQQQCKQPCQPPPVCPT. 3 tandem repeats follow at residues 21–29, 30–38, and 39–47. Residues 21-47 are 3 X 9 AA tandem repeats of P-K-C-P-[EQ]-P-C-P-P; sequence PKCPEPCPPPKCPEPCPPPKCPQPCPP. A disordered region spans residues 42 to 72; that stretch reads PQPCPPQQCQQKYPPVTPSPPCQSKYPPKSK.

It belongs to the cornifin (SPRR) family. Post-translationally, forms five pairs of intrachain disulfide bonds. As to expression, expressed in intestine; selectively expressed in goblet cells.

The protein localises to the secreted. It localises to the extracellular space. The protein resides in the cytoplasmic vesicle. Its subcellular location is the secretory vesicle. Its function is as follows. Gut bactericidal protein that selectively kills Gram-positive bacteria by binding to negatively charged lipids on bacterial membranes, leading to bacterial membrane permeabilization and disruption. Specifically binds lipids bearing negatively charged headgroups, such as phosphatidic acid, phosphatidylserine (PS), cardiolipin (CL), and phosphatidylinositol phosphates, but not to zwitterionic or neutral lipids. Induced by type-2 cytokines in response to helminth infection and is required to protect against helminth-induced bacterial invasion of intestinal tissue. May also be involved in the development of the cornified envelope of squamous epithelia; however, additional evidences are required to confirm this result in vivo. The chain is Small proline-rich protein 2A from Homo sapiens (Human).